Consider the following 37-residue polypeptide: Large ribosomal subunit protein bL36 (37 aa).

The protein belongs to the bacterial ribosomal protein bL36 family.

The chain is Large ribosomal subunit protein bL36 (rpmJ) from Mycoplasma sp.